Reading from the N-terminus, the 458-residue chain is Alpha-glucosides-binding periplasmic protein AglE (458 aa).

Residues 1–27 (MKRSLLIGVAAFALLAGTAGLAGTAGA) form the signal peptide.

Belongs to the bacterial solute-binding protein 1 family.

It is found in the periplasm. In terms of biological role, part of the binding-protein-dependent transport system for alpha-glucosides such as sucrose, maltose and trehalose. This is Alpha-glucosides-binding periplasmic protein AglE (aglE) from Rhizobium meliloti (strain 1021) (Ensifer meliloti).